A 485-amino-acid chain; its full sequence is Glutamyl-tRNA(Gln) amidotransferase subunit A (485 aa).

Active-site charge relay system residues include K79 and S154. Residue S178 is the Acyl-ester intermediate of the active site.

The protein belongs to the amidase family. GatA subfamily. In terms of assembly, heterotrimer of A, B and C subunits.

It carries out the reaction L-glutamyl-tRNA(Gln) + L-glutamine + ATP + H2O = L-glutaminyl-tRNA(Gln) + L-glutamate + ADP + phosphate + H(+). Allows the formation of correctly charged Gln-tRNA(Gln) through the transamidation of misacylated Glu-tRNA(Gln) in organisms which lack glutaminyl-tRNA synthetase. The reaction takes place in the presence of glutamine and ATP through an activated gamma-phospho-Glu-tRNA(Gln). This Geobacillus kaustophilus (strain HTA426) protein is Glutamyl-tRNA(Gln) amidotransferase subunit A.